The primary structure comprises 301 residues: Ribosomal RNA small subunit methyltransferase A (301 aa).

Residues Asn-29, Leu-31, Gly-56, Glu-77, Asp-102, and Asn-127 each contribute to the S-adenosyl-L-methionine site.

This sequence belongs to the class I-like SAM-binding methyltransferase superfamily. rRNA adenine N(6)-methyltransferase family. RsmA subfamily.

The protein resides in the cytoplasm. The enzyme catalyses adenosine(1518)/adenosine(1519) in 16S rRNA + 4 S-adenosyl-L-methionine = N(6)-dimethyladenosine(1518)/N(6)-dimethyladenosine(1519) in 16S rRNA + 4 S-adenosyl-L-homocysteine + 4 H(+). Its function is as follows. Specifically dimethylates two adjacent adenosines (A1518 and A1519) in the loop of a conserved hairpin near the 3'-end of 16S rRNA in the 30S particle. May play a critical role in biogenesis of 30S subunits. The protein is Ribosomal RNA small subunit methyltransferase A of Halothermothrix orenii (strain H 168 / OCM 544 / DSM 9562).